The primary structure comprises 113 residues: Con-Ins G3 (113 aa).

The signal sequence occupies residues 1–21; that stretch reads MTTSFYFLLVALGLLLYVCQS. A propeptide spanning residues 22 to 29 is cleaved from the precursor; that stretch reads SFGNQHTR. Pro34 is subject to 4-hydroxyproline; partial. 3 disulfide bridges follow: Cys38-Cys99, Cys50-Cys112, and Cys98-Cys103. Glu41 carries the post-translational modification 4-carboxyglutamate. His51 carries the post-translational modification Histidine amide. A propeptide spans 52 to 92 (c peptide); it reads GKRNDAGKKRGRASPLWQRQGFLSMLKAKRNEAFFLQRDGR. Glu96 is modified (4-carboxyglutamate). Pro102 is subject to 4-hydroxyproline; partial.

Belongs to the insulin family. As to quaternary structure, heterodimer of A and B chains; disulfide-linked. Post-translationally, it is noteworthy that in this dimer, in contrast to Con-Ins G1, the chain B is amidated and not the chain A. In terms of tissue distribution, expressed by the venom gland.

Its subcellular location is the secreted. In terms of biological role, this venom insulin, from a fish-hunting cone snail, facilitates prey capture by rapidly inducing hypoglycemic shock. It is one of the smallest known insulin found in nature and lacks the C-terminal segment of the B chain that, in human insulin, mediates engagement of the insulin receptor (INSR) and assembly of the hormone's hexameric storage form. Despite lacking this segment, it both binds and activates human insulin receptor (long isoform (HIR-B)) with a high potency (EC(50)=242 nM). In vivo, intraperitoneal injection of this peptide into zebrafish lowers blood glucose with a lower potency than human insulin. In addition, when applied to water, this peptide reduces overall locomotor activity of zebrafish larvae, observed as a significant decrease in the percentage of time spent swimming and movement frequency. When tested on a mouse model of diabetes, this insulin also lowers blood glucose with a 10-fold lower potency than human insulin. This is Con-Ins G3 from Conus geographus (Geography cone).